Here is a 1487-residue protein sequence, read N- to C-terminus: MIRLGAPQTLVLLTLLVAAVLRCHGQDVQKAGSCVQDGQRYNDKDVWKPEPCRICVCDTGTVLCDDIICEDMKDCLSPETPFGECCPICSADLPTASGQPGPKGQKGEPGDIKDIVGPKGPPGPQGPAGEQGPRGDRGDKGEKGAPGPRGRDGEPGTPGNPGPPGPPGPPGPPGLGGNFAAQMAGGFDEKAGGAQMGVMQGPMGPMGPRGPPGPAGAPGPQGFQGNPGEPGEPGVSGPMGPRGPPGPPGKPGDDGEAGKPGKSGERGPPGPQGARGFPGTPGLPGVKGHRGYPGLDGAKGEAGAPGVKGESGSPGENGSPGPMGPRGLPGERGRTGPAGAAGARGNDGQPGPAGPPGPVGPAGGPGFPGAPGAKGEAGPTGARGPEGAQGPRGEPGTPGSPGPAGAAGNPGTDGIPGAKGSAGAPGIAGAPGFPGPRGPPGPQGATGPLGPKGQTGEPGIAGFKGEQGPKGEPGPAGPQGAPGPAGEEGKRGARGEPGGAGPAGPPGERGAPGNRGFPGQDGLAGPKGAPGERGPSGLAGPKGANGDPGRPGEPGLPGARGLTGRPGDAGPQGKVGPSGAPGEDGRPGPPGPQGARGQPGVMGFPGPKGANGEPGKAGEKGLPGAPGLRGLPGKDGETGAAGPPGPAGPAGERGEQGAPGPSGFQGLPGPPGPPGEGGKPGDQGVPGEAGAPGLVGPRGERGFPGERGSPGSQGLQGARGLPGTPGTDGPKGAAGPAGPPGAQGPPGLQGMPGERGAAGIAGPKGDRGDVGEKGPEGAPGKDGGRGLTGPIGPPGPAGANGEKGEVGPPGPAGTAGARGAPGERGETGPPGPAGFAGPPGADGQPGAKGEQGEAGQKGDAGAPGPQGPSGAPGPQGPTGVTGPKGARGAQGPPGATGFPGAAGRVGPPGSNGNPGPPGPPGPSGKDGPKGARGDSGPPGRAGDPGLQGPAGPPGEKGEPGDDGPSGPDGPPGPQGLAGQRGIVGLPGQRGERGFPGLPGPSGEPGKQGAPGASGDRGPPGPVGPPGLTGPAGEPGREGSPGADGPPGRDGAAGVKGDRGETGAVGAPGAPGPPGSPGPAGPIGKQGDRGEAGAQGPMGPAGPAGARGMPGPQGPRGDKGETGEAGERGLKGHRGFTGLQGLPGPPGPSGDQGASGPAGPSGPRGPPGPVGPSGKDGANGIPGPIGPPGPRGRSGETGPAGPPGNPGPPGPPGPPGPGIDMSAFAGLGQREKGPDPLQYMRADEAAGNLRQHDAEVDATLKSLNNQIESLRSPEGSRKNPARTCRDLKLCHPEWKSGDYWIDPNQGCTLDAMKVFCNMETGETCVYPNPASVPKKNWWSSKSKDKKHIWFGETINGGFHFSYGDDNLAPNTANVQMTFLRLLSTEGSQNITYHCKNSIAYLDEAAGNLKKALLIQGSNDVEIRAEGNSRFTYTVLKDGCTKHTGKWGKTMIEYRSQKTSRLPIIDIAPMDIGGPEQEFGVDIGPVCFL.

A signal peptide spans 1–25; it reads MIRLGAPQTLVLLTLLVAAVLRCHG. The propeptide at 26 to 181 is N-terminal propeptide; it reads QDVQKAGSCV…PPGLGGNFAA (156 aa). A VWFC domain is found at 32-90; that stretch reads GSCVQDGQRYNDKDVWKPEPCRICVCDTGTVLCDDIICEDMKDCLSPETPFGECCPICS. The tract at residues 96 to 1234 is disordered; sequence ASGQPGPKGQ…GLGQREKGPD (1139 aa). 2 stretches are compositionally biased toward basic and acidic residues: residues 105–116 and 133–154; these read QKGEPGDIKDIV and PRGDRGDKGEKGAPGPRGRDGE. Residues 158-173 are compositionally biased toward pro residues; sequence PGNPGPPGPPGPPGPP. A 5-hydroxylysine modification is found at Lys190. Residue Lys190 is glycosylated (O-linked (Gal...) hydroxylysine). A compositionally biased stretch (low complexity) spans 192–203; that stretch reads GGAQMGVMQGPM. A triple-helical region region spans residues 201–1214; that stretch reads GPMGPMGPRG…PGPPGPPGPP (1014 aa). The span at 208-217 shows a compositional bias: pro residues; it reads PRGPPGPAGA. Residues Pro212, Pro218, Pro230, Pro233, Pro245, Pro248, Pro251, Pro260, Pro269, Pro278, Pro281, and Pro284 each carry the hydroxyproline modification. The span at 218 to 239 shows a compositional bias: low complexity; that stretch reads PGPQGFQGNPGEPGEPGVSGPM. Residues 241-250 are compositionally biased toward pro residues; it reads PRGPPGPPGK. Over residues 251 to 265 the composition is skewed to basic and acidic residues; the sequence is PGDDGEAGKPGKSGE. At Lys287 the chain carries 5-hydroxylysine. Lys287 is a glycosylation site (O-linked (Gal...) hydroxylysine). Pro293 is subject to Hydroxyproline. 5-hydroxylysine is present on Lys299. A glycan (O-linked (Gal...) hydroxylysine) is linked at Lys299. Position 305 is a hydroxyproline (Pro305). Residue Lys308 is modified to 5-hydroxylysine. Lys308 carries an O-linked (Gal...) hydroxylysine glycan. Residues 310 to 320 show a composition bias toward low complexity; the sequence is ESGSPGENGSP. 8 positions are modified to hydroxyproline: Pro314, Pro320, Pro329, Pro350, Pro356, Pro365, Pro368, and Pro371. Over residues 335 to 350 the composition is skewed to low complexity; sequence TGPAGAAGARGNDGQP. The span at 360 to 369 shows a compositional bias: gly residues; the sequence is GPAGGPGFPG. Low complexity-rich tracts occupy residues 370–382 and 391–431; these read APGAKGEAGPTGA and PRGE…AGAP. Lys374 is modified (5-hydroxylysine). The O-linked (Gal...) hydroxylysine glycan is linked to Lys374. Hydroxyproline occurs at positions 395, 398, 401, 410, and 416. Lys419 is subject to 5-hydroxylysine. Pro425, Pro431, Pro434, and Pro440 each carry hydroxyproline. Residues 433 to 442 are compositionally biased toward pro residues; sequence FPGPRGPPGP. Lys452 carries the post-translational modification 5-hydroxylysine. Pro458 carries the hydroxyproline modification. Residues Lys464 and Lys470 each carry the 5-hydroxylysine modification. Pro473, Pro482, Pro497, Pro506, Pro512, and Pro518 each carry hydroxyproline. Position 527 is a 5-hydroxylysine (Lys527). Pro530 carries the hydroxyproline modification. 5-hydroxylysine is present on Lys542. A hydroxyproline mark is found at Pro551, Pro557, Pro566, Pro581, Pro587, Pro590, Pro599, and Pro605. 5-hydroxylysine is present on Lys608. An O-linked (Gal...) hydroxylysine glycan is attached at Lys608. Hydroxyproline is present on Pro614. At Lys620 the chain carries 5-hydroxylysine. Lys620 carries O-linked (Gal...) hydroxylysine glycosylation. The span at 622–631 shows a compositional bias: low complexity; the sequence is LPGAPGLRGL. 6 positions are modified to hydroxyproline: Pro623, Pro626, Pro632, Pro644, Pro659, and Pro668. Low complexity predominate over residues 656–667; sequence QGAPGPSGFQGL. The residue at position 670 (Pro670) is a 3-hydroxyproline. Hydroxyproline is present on residues Pro671 and Pro674. Over residues 721–736 the composition is skewed to low complexity; it reads LPGTPGTDGPKGAAGP. A compositionally biased stretch (basic and acidic residues) spans 764 to 775; sequence KGDRGDVGEKGP. Low complexity-rich tracts occupy residues 833 to 848 and 877 to 913; these read AGFAGPPGADGQPGAK and PTGVTGPKGARGAQGPPGATGFPGAAGRVGPPGSNGN. At Pro907 the chain carries 3-hydroxyproline. 4-hydroxyproline occurs at positions 908, 914, and 920. Residues 1069–1079 show a composition bias toward pro residues; it reads APGPPGSPGPA. The segment covering 1091-1109 has biased composition (low complexity); sequence AGAQGPMGPAGPAGARGMP. Residues 1115–1129 show a composition bias toward basic and acidic residues; that stretch reads RGDKGETGEAGERGL. The residue at position 1130 (Lys1130) is a 5-hydroxylysine. Lys1130 carries O-linked (Gal...) hydroxylysine glycosylation. At Pro1144 the chain carries 3-hydroxyproline. Positions 1148–1157 are enriched in low complexity; that stretch reads SGDQGASGPA. Pro1181 bears the 4-hydroxyproline mark. Pro1186 carries the 3-hydroxyproline modification. Residue Pro1187 is modified to 4-hydroxyproline. The segment covering 1199-1216 has biased composition (pro residues); it reads AGPPGNPGPPGPPGPPGP. 3-hydroxyproline is present on Pro1201. 4-hydroxyproline is present on residues Pro1202 and Pro1205. Pro1207 is modified (3-hydroxyproline). A 4-hydroxyproline mark is found at Pro1208 and Pro1211. Position 1213 is a 3-hydroxyproline (Pro1213). Pro1214 is subject to 4-hydroxyproline. The interval 1215–1241 is nonhelical region (C-terminal); that stretch reads GPGIDMSAFAGLGQREKGPDPLQYMRA. In terms of domain architecture, Fibrillar collagen NC1 spans 1253–1487; sequence AEVDATLKSL…GVDIGPVCFL (235 aa). Disulfide bonds link Cys1283–Cys1315, Cys1323–Cys1485, and Cys1393–Cys1438. The Ca(2+) site is built by Asp1301, Asn1303, Gln1304, Cys1306, and Asp1309. An N-linked (GlcNAc...) asparagine glycan is attached at Asn1388.

It belongs to the fibrillar collagen family. As to quaternary structure, homotrimers of alpha 1(II) chains. Probably 3-hydroxylated on prolines by LEPREL1. Proline residues at the third position of the tripeptide repeating unit (G-X-P) are hydroxylated in some or all of the chains. Proline residues at the second position of the tripeptide repeating unit (G-P-X) are hydroxylated in some of the chains. Post-translationally, O-linked glycans consist of Glc-Gal disaccharides bound to the oxygen atom of post-translationally added hydroxyl groups. In terms of processing, contains mostly 4-hydroxyproline. Prolines at the third position of the tripeptide repeating unit (G-X-P) are 4-hydroxylated in some or all of the chains. Contains 3-hydroxyproline at a few sites. This modification occurs on the first proline residue in the sequence motif Gly-Pro-Hyp, where Hyp is 4-hydroxyproline. Post-translationally, lysine residues at the third position of the tripeptide repeating unit (G-X-Y) are 5-hydroxylated in some or all of the chains. In terms of processing, O-glycosylated on hydroxylated lysine residues. The O-linked glycan consists of a Glc-Gal disaccharide.

The protein resides in the secreted. It is found in the extracellular space. The protein localises to the extracellular matrix. Its function is as follows. Type II collagen is specific for cartilaginous tissues. It is essential for the normal embryonic development of the skeleton, for linear growth and for the ability of cartilage to resist compressive forces. This Bos taurus (Bovine) protein is Collagen alpha-1(II) chain.